A 61-amino-acid chain; its full sequence is Small ribosomal subunit protein uS14 (61 aa).

Positions 24, 27, 40, and 43 each coordinate Zn(2+).

It belongs to the universal ribosomal protein uS14 family. Zinc-binding uS14 subfamily. As to quaternary structure, part of the 30S ribosomal subunit. Contacts proteins S3 and S10. Zn(2+) is required as a cofactor.

Its function is as follows. Binds 16S rRNA, required for the assembly of 30S particles and may also be responsible for determining the conformation of the 16S rRNA at the A site. The polypeptide is Small ribosomal subunit protein uS14 (Mesomycoplasma hyopneumoniae (strain 232) (Mycoplasma hyopneumoniae)).